The chain runs to 199 residues: Twist-related protein (199 aa).

The tract at residues 1 to 43 (MQEHQLSRVTSGNKKKYQSFDDESRDEKRMKCDSTDKLESNSN) is disordered. Over residues 25 to 39 (RDEKRMKCDSTDKLE) the composition is skewed to basic and acidic residues. Residues 51–102 (THRVIANIRERQRTQALNQSFSTLRKIIPTLPSDKLSKIQTLRLAAMYIDFL) enclose the bHLH domain.

As to quaternary structure, efficient DNA binding requires dimerization with another bHLH protein. Homodimer. Expression is seen at the point of medusa formation in the ectodermal and endodermal bud tissues, and in the entocodon which gives rise to all smooth and striated muscle cells. After the subumbrellar plate differentiates from the endoderm, strong expression is detected until the medusa detaches from the gonzoid. Expression is observed in the distal part of the medusa but diminishes in entocodon-derived muscles as the tissues differentiate, with expression disappearing completely after stage 8. In later stages expression is seen in the distal and proximal parts of the bud and depending on state of maturity, in the developing gonadal tissue.

The protein localises to the nucleus. Probable transcription factor, which may be responsible for the formation of myoepithelial cells in early muscle development in larva and the formation of non-muscle tissues in later bud stages and mesoderm-like structures in the medusa. In Podocoryna carnea (Hydrozoan), this protein is Twist-related protein.